We begin with the raw amino-acid sequence, 108 residues long: Insulin (108 aa).

The N-terminal stretch at 1–24 (MALWTRLLPLLALLALWAPAPAQA) is a signal peptide. Cystine bridges form between C31–C94, C43–C107, and C93–C98. Residues 57-85 (EAENPQAGAVELGGGLGGLQALALEGPPQ) constitute a propeptide, c peptide.

The protein belongs to the insulin family. Heterodimer of a B chain and an A chain linked by two disulfide bonds.

It localises to the secreted. Insulin decreases blood glucose concentration. It increases cell permeability to monosaccharides, amino acids and fatty acids. It accelerates glycolysis, the pentose phosphate cycle, and glycogen synthesis in liver. This chain is Insulin (INS), found in Sus scrofa (Pig).